The sequence spans 210 residues: Pyridoxine/pyridoxamine 5'-phosphate oxidase (210 aa).

Substrate is bound by residues 7–10 and lysine 65; that span reads REDY. FMN-binding positions include 60-65, 75-76, arginine 81, lysine 82, and glutamine 104; these read RMVLLK and FT. Residues tyrosine 122, arginine 126, and serine 130 each coordinate substrate. FMN is bound by residues 139-140 and tryptophan 183; that span reads QS. 189-191 contributes to the substrate binding site; the sequence is RLH. Arginine 193 is an FMN binding site.

This sequence belongs to the pyridoxamine 5'-phosphate oxidase family. In terms of assembly, homodimer. Requires FMN as cofactor.

It catalyses the reaction pyridoxamine 5'-phosphate + O2 + H2O = pyridoxal 5'-phosphate + H2O2 + NH4(+). The catalysed reaction is pyridoxine 5'-phosphate + O2 = pyridoxal 5'-phosphate + H2O2. Its pathway is cofactor metabolism; pyridoxal 5'-phosphate salvage; pyridoxal 5'-phosphate from pyridoxamine 5'-phosphate: step 1/1. It participates in cofactor metabolism; pyridoxal 5'-phosphate salvage; pyridoxal 5'-phosphate from pyridoxine 5'-phosphate: step 1/1. Catalyzes the oxidation of either pyridoxine 5'-phosphate (PNP) or pyridoxamine 5'-phosphate (PMP) into pyridoxal 5'-phosphate (PLP). The sequence is that of Pyridoxine/pyridoxamine 5'-phosphate oxidase from Neisseria meningitidis serogroup C (strain 053442).